The following is a 502-amino-acid chain: Glutamate--tRNA ligase (502 aa).

Positions 9-19 match the 'HIGH' region motif; it reads PSPTGDPHVGT. Residues Cys106, Cys108, Cys133, and His135 each coordinate Zn(2+). Positions 250 to 254 match the 'KMSKS' region motif; sequence KLSKR. ATP is bound at residue Lys253.

This sequence belongs to the class-I aminoacyl-tRNA synthetase family. Glutamate--tRNA ligase type 1 subfamily. In terms of assembly, monomer. Zn(2+) is required as a cofactor.

It is found in the cytoplasm. The enzyme catalyses tRNA(Glu) + L-glutamate + ATP = L-glutamyl-tRNA(Glu) + AMP + diphosphate. Catalyzes the attachment of glutamate to tRNA(Glu) in a two-step reaction: glutamate is first activated by ATP to form Glu-AMP and then transferred to the acceptor end of tRNA(Glu). The sequence is that of Glutamate--tRNA ligase from Protochlamydia amoebophila (strain UWE25).